The chain runs to 520 residues: Signal peptide peptidase-like 2A (520 aa).

The signal sequence occupies residues 1–25 (MGPQRRLSPAGAALLWGFLLQLTAA). The Lumenal portion of the chain corresponds to 26–172 (QEAILHASGN…PSWPNFDYTM (147 aa)). N-linked (GlcNAc...) asparagine glycosylation is found at Asn-58, Asn-66, Asn-74, Asn-116, Asn-126, and Asn-149. A PA domain is found at 63–151 (SLMNLTSTPL…YKDFRDMNQT (89 aa)). An N-linked (GlcNAc...) (complex) asparagine glycan is attached at Asn-155. A helical transmembrane segment spans residues 173 to 193 (VVIFVIAVFTVALGGYWSGLV). At 194 to 220 (ELENLKAVTTEDREMRKKKEEYLTFSP) the chain is on the cytoplasmic side. A helical transmembrane segment spans residues 221-241 (LTVVIFVVICCVMMVLLYFFY). Topologically, residues 242–247 (KWLVYV) are lumenal. Residues 248 to 268 (MIAIFCIASAMSLYNCLAALI) form a helical membrane-spanning segment. The Cytoplasmic segment spans residues 269-285 (HKIPYGQCTIACRGKNM). A helical transmembrane segment spans residues 286–306 (EVRLIFLSGLCIAVAVVWAVF). Over 307-311 (RNEDR) the chain is Lumenal. The helical transmembrane segment at 312–332 (WAWILQDILGIAFCLNLIKTL) threads the bilayer. Residues 333–340 (KLPNFKSC) are Cytoplasmic-facing. The helical transmembrane segment at 341 to 361 (VILLGLLLLYDVFFVFITPFI) threads the bilayer. Asp-351 is a catalytic residue. Residues 362-399 (TKNGESIMVELAAGPFGNNEKLPVVIRVPKLIYFSVMS) are Lumenal-facing. Residues 400–420 (VCLMPVSILGFGDIIVPGLLI) form a helical membrane-spanning segment. Residue Asp-412 is part of the active site. The Cytoplasmic segment spans residues 421-437 (AYCRRFDVQTGSSYIYY). Residues 438–458 (VSSTVAYAIGMILTFVVLVLM) form a helical membrane-spanning segment. The Lumenal portion of the chain corresponds to 459 to 460 (KK). Residues 461 to 481 (GQPALLYLVPCTLITASVVAW) form a helical membrane-spanning segment. Positions 463 to 465 (PAL) match the PAL motif. Over 482 to 520 (RRKEMKKFWKGNSYQMMDHLDCATNEENPVISGEQIVQQ) the chain is Cytoplasmic. The YXXo lysosomal targeting motif motif lies at 495-498 (YQMM).

The protein belongs to the peptidase A22B family. In terms of assembly, interacts with ITM2B. Post-translationally, glycosylated. In terms of tissue distribution, ubiquitous.

The protein resides in the late endosome membrane. It is found in the lysosome membrane. The protein localises to the membrane. In terms of biological role, intramembrane-cleaving aspartic protease (I-CLiP) that cleaves type II membrane signal peptides in the hydrophobic plane of the membrane. Functions in FASLG, ITM2B and TNF processing. Catalyzes the intramembrane cleavage of the anchored fragment of shed TNF-alpha (TNF), which promotes the release of the intracellular domain (ICD) for signaling to the nucleus. Also responsible for the intramembrane cleavage of Fas antigen ligand FASLG, which promotes the release of the intracellular FasL domain (FasL ICD). Essential for degradation of the invariant chain CD74 that plays a central role in the function of antigen-presenting cells in the immune system. Plays a role in the regulation of innate and adaptive immunity. Catalyzes the intramembrane cleavage of the simian foamy virus envelope glycoprotein gp130 independently of prior ectodomain shedding by furin or furin-like proprotein convertase (PC)-mediated cleavage proteolysis. In Homo sapiens (Human), this protein is Signal peptide peptidase-like 2A.